A 216-amino-acid chain; its full sequence is 3-keto-L-gulonate-6-phosphate decarboxylase UlaD (216 aa).

Asp-11 lines the substrate pocket. Residues Glu-33 and Asp-62 each contribute to the Mg(2+) site. Position 192 (Arg-192) interacts with substrate.

This sequence belongs to the HPS/KGPDC family. KGPDC subfamily. Homodimer. Mg(2+) serves as cofactor.

The enzyme catalyses 3-dehydro-L-gulonate 6-phosphate + H(+) = L-xylulose 5-phosphate + CO2. It functions in the pathway cofactor degradation; L-ascorbate degradation; D-xylulose 5-phosphate from L-ascorbate: step 2/4. Functionally, catalyzes the decarboxylation of 3-keto-L-gulonate-6-P into L-xylulose-5-P. Is involved in the anaerobic L-ascorbate utilization. The protein is 3-keto-L-gulonate-6-phosphate decarboxylase UlaD of Salmonella typhi.